Reading from the N-terminus, the 739-residue chain is MDSKIQPTLRPGSSCPRPEWPEQERAEQLARGAALKWASGIFYRPEQLTRLGQYRSREIQRNYSLEARIKSVVQSYLEGVQTGVWQLTRALEAVQGTREALSQAHHLLKGLSRTSQTLEPLRECVVQHKQLQILTRLLPRLQAVPATVAHTQTLIDSERLLEAYVSLRELEQLKEETLAPLGGLELPIFQGLGLLAEALGQAVEAAAGAAGRLAREDPALLVAAIRVAEVETERTILGQAPRDWRQRCLRALQEGLERVHFASPVLPEPGALAGWLEALQVALPAELATAEALVAPCCPPSYRVVELWAHTLHSGLRRSVQQLLAGPELGAADTFALLHWALHVYTGKEMMGNLELGPEADVSQLEPLLTSENIEQLEAAFVAQVQVSVAQWLKKALDGEVAEWSGEQEPPTDPSGFYHSPMPAIVLQILAENIQVTNLISDSLHRRAHNMAVSELGAFLRSFSDALIRFSRDHLRGDAVAPHYVPYLLSAFNHQSALRSSVSVLLPDGEASGVLAPVEAALDDVQRRICRLVLEVLQVELQPLFSALPSRRWLLSSELLDGVCEQTSHFCQDFWRVRKPGVQLLLAEAERTVVLQYLRALMQGRLVCRGTDERSQAAERLRQDAAQLKELFLGLGLEESAHCAPVLLALRELLNLHDPTLLGLEVAGLRQQFPDVSEDHVSALLDLRGDVSREHRQAALSSLQAGPPPSPSTGRRALFSLVPTPTPSLSSCLPSGPCS.

Disordered stretches follow at residues 1 to 21 (MDSK…PEWP) and 698 to 718 (AALS…RRAL). Positions 1–370 (MDSKIQPTLR…DVSQLEPLLT (370 aa)) are mediates interaction with EXOC2, EXOC4 and EXOC5.

Belongs to the SEC6 family. As to quaternary structure, interacts with EXOC2, EXOC4 and EXOC5; may be part of the exocyst. In terms of tissue distribution, ubiquitously expressed.

The protein resides in the cytoplasmic vesicle. Its subcellular location is the secretory vesicle. Functionally, as part of the exocyst, may play a role in regulated exocytosis of insulin granules. This chain is Exocyst complex component 3-like protein (Exoc3l1), found in Mus musculus (Mouse).